A 396-amino-acid chain; its full sequence is Chalcone synthase B (396 aa).

C170 is an active-site residue.

Belongs to the thiolase-like superfamily. Chalcone/stilbene synthases family.

The catalysed reaction is (E)-4-coumaroyl-CoA + 3 malonyl-CoA + 3 H(+) = 2',4,4',6'-tetrahydroxychalcone + 3 CO2 + 4 CoA. It functions in the pathway secondary metabolite biosynthesis; flavonoid biosynthesis. In terms of biological role, the primary product of this enzyme is 4,2',4',6'-tetrahydroxychalcone (also termed naringenin-chalcone or chalcone) which can under specific conditions spontaneously isomerize into naringenin. This Ipomoea purpurea (Common morning glory) protein is Chalcone synthase B (CHSB).